A 250-amino-acid chain; its full sequence is Golgi SNAP receptor complex member 1 (250 aa).

Position 2 is an N-acetylalanine (alanine 2). Topologically, residues 2-229 (AAGTSSYWED…QRINLRKRRD (228 aa)) are cytoplasmic. A coiled-coil region spans residues 9-30 (WEDLRKQARQLENELDLKLVSF). The disordered stretch occupies residues 38–59 (SHSSTRDGRRDRYSSDTTPLLN). Positions 41–51 (STRDGRRDRYS) are enriched in basic and acidic residues. Positions 68–95 (ETMAIEIEQLLARLTGVNDKMAEYTNSA) form a coiled coil. Residue serine 141 is modified to Phosphoserine. A helical; Anchor for type IV membrane protein transmembrane segment spans residues 230 to 250 (SLILGGVIGICTILLLLYAFH).

The protein belongs to the GOSR1 family. In terms of assembly, component of several multiprotein Golgi SNARE complexes. Identified in a SNARE complex with BET1, STX5 and YKT6, in a SNARE complex with BET1L, STX5 and YKT6, in a SNARE complex with STX5, GOSR2, SEC22B and BET1, and in complex with STX5 and COG3. Interacts with GABARAPL2.

The protein resides in the golgi apparatus membrane. Functionally, involved in transport from the ER to the Golgi apparatus as well as in intra-Golgi transport. It belongs to a super-family of proteins called t-SNAREs or soluble NSF (N-ethylmaleimide-sensitive factor) attachment protein receptor. May play a protective role against hydrogen peroxide induced cytotoxicity under glutathione depleted conditions in neuronal cells by regulating the intracellular ROS levels via inhibition of p38 MAPK (MAPK11, MAPK12, MAPK13 and MAPK14). Participates in docking and fusion stage of ER to cis-Golgi transport. Plays an important physiological role in VLDL-transport vesicle-Golgi fusion and thus in VLDL delivery to the hepatic cis-Golgi. This Homo sapiens (Human) protein is Golgi SNAP receptor complex member 1 (GOSR1).